We begin with the raw amino-acid sequence, 165 residues long: uncharacterized protein (165 aa).

The signal sequence occupies residues 1–25; sequence MKRVLFSVIVFTAVGFTFCQSKAHA.

This is an uncharacterized protein from Bacillus subtilis (strain 168).